The following is a 339-amino-acid chain: DNA-directed RNA polymerase subunit alpha (339 aa).

Positions Met1 to Glu233 are alpha N-terminal domain (alpha-NTD). Residues Lys264 to Phe339 form an alpha C-terminal domain (alpha-CTD) region.

It belongs to the RNA polymerase alpha chain family. In plastids the minimal PEP RNA polymerase catalytic core is composed of four subunits: alpha, beta, beta', and beta''. When a (nuclear-encoded) sigma factor is associated with the core the holoenzyme is formed, which can initiate transcription.

It localises to the plastid. It is found in the chloroplast. The catalysed reaction is RNA(n) + a ribonucleoside 5'-triphosphate = RNA(n+1) + diphosphate. In terms of biological role, DNA-dependent RNA polymerase catalyzes the transcription of DNA into RNA using the four ribonucleoside triphosphates as substrates. The polypeptide is DNA-directed RNA polymerase subunit alpha (Festucopsis serpentini).